The sequence spans 400 residues: Diphosphomevalonate decarboxylase (400 aa).

Ala2 bears the N-acetylalanine mark. Residues 23–26 (YWGK) and Arg78 contribute to the (R)-5-diphosphomevalonate site. Ser96 is modified (phosphoserine). (R)-5-diphosphomevalonate-binding positions include 156–161 (SGSACR) and Thr212.

This sequence belongs to the diphosphomevalonate decarboxylase family. Homodimer. As to expression, expressed in heart, skeletal muscle, lung, liver, brain, pancreas, kidney and placenta.

The protein localises to the cytoplasm. It carries out the reaction (R)-5-diphosphomevalonate + ATP = isopentenyl diphosphate + ADP + phosphate + CO2. It functions in the pathway steroid biosynthesis; cholesterol biosynthesis. In terms of biological role, catalyzes the ATP dependent decarboxylation of (R)-5-diphosphomevalonate to form isopentenyl diphosphate (IPP). Functions in the mevalonate (MVA) pathway leading to isopentenyl diphosphate (IPP), a key precursor for the biosynthesis of isoprenoids and sterol synthesis. This chain is Diphosphomevalonate decarboxylase (MVD), found in Homo sapiens (Human).